The sequence spans 171 residues: N5-carboxyaminoimidazole ribonucleotide mutase (171 aa).

3 residues coordinate substrate: S13, D16, and R43.

This sequence belongs to the AIR carboxylase family. Class I subfamily.

It catalyses the reaction 5-carboxyamino-1-(5-phospho-D-ribosyl)imidazole + H(+) = 5-amino-1-(5-phospho-D-ribosyl)imidazole-4-carboxylate. Its pathway is purine metabolism; IMP biosynthesis via de novo pathway; 5-amino-1-(5-phospho-D-ribosyl)imidazole-4-carboxylate from 5-amino-1-(5-phospho-D-ribosyl)imidazole (N5-CAIR route): step 2/2. Functionally, catalyzes the conversion of N5-carboxyaminoimidazole ribonucleotide (N5-CAIR) to 4-carboxy-5-aminoimidazole ribonucleotide (CAIR). This is N5-carboxyaminoimidazole ribonucleotide mutase from Mycobacterium leprae (strain TN).